The primary structure comprises 427 residues: Intermediate conductance calcium-activated potassium channel protein 4 (427 aa).

The chain crosses the membrane as a helical span at residues 29 to 49 (ALVLAGTGIGLMVLHAEMLWF). A helical membrane pass occupies residues 59–79 (FLVKCTISISTFLLLCLIVAF). The chain crosses the membrane as a helical span at residues 108–128 (IVLELVVCGLHPAPVRGPPCV). The helical transmembrane segment at 143–163 (GFLGQGEALLSLAMLLRLYLV) threads the bilayer. Residues 207–227 (LLLGLTLGLWLTTAWVLSVAE) traverse the membrane as a helical segment. The segment at residues 241-261 (LWLIPITFLTIGYGDVVPGTM) is an intramembrane region (pore-forming). A helical transmembrane segment spans residues 265–285 (IVCLCTGVMGVCCTALLVAVV). The calmodulin-binding stretch occupies residues 286–347 (ARKLEFNKAE…RRHQRKLLAA (62 aa)). H358 is modified (phosphohistidine).

It belongs to the potassium channel KCNN family. KCa3.1/KCNN4 subfamily. In terms of assembly, homodimer. Homotetramer. Heterotetramer of potassium channel proteins. Interacts with MTMR6; this interaction leads to selective dephosphorylation of PI(3)P in a lipid microdomain adjacent to KCNN4, resulting in a decrease of intermediate conductance calcium-activated potassium channel activity. Interacts (via the C-tail domain) with CALM1; the calmodulin binding is constitutive, does not require calcium and mediates calcium-dependent gating and four calmodulin molecules bind to one channel tetramer. Phosphorylation at His-358 by NDKB activates the intermediate conductance calcium-activated potassium channel activity, and conversely it's dephosphorylation by PHPT1 inhibits this activity. In terms of tissue distribution, widely expressed in non-excitable tissues.

The protein localises to the cell membrane. It is found in the cell projection. It localises to the ruffle membrane. It carries out the reaction K(+)(in) = K(+)(out). The channel is inhibited by clotrimazole and charybdotoxin but is insensitive to apamin. Its function is as follows. Intermediate conductance calcium-activated potassium channel that mediates the voltage-independent transmembrane transfer of potassium across the cell membrane through a constitutive interaction with calmodulin which binds the intracellular calcium allowing its opening. The current is characterized by a voltage-independent activation, an intracellular calcium concentration increase-dependent activation and a single-channel conductance of about 25 picosiemens. Also presents an inwardly rectifying current, thus reducing its already small outward conductance of potassium ions, which is particularly the case when the membrane potential displays positive values, above + 20 mV. Controls calcium influx during vascular contractility by being responsible of membrane hyperpolarization induced by vasoactive factors in proliferative vascular smooth muscle cell types. Following calcium influx, the consecutive activation of KCNN4 channel leads to a hyperpolarization of the cell membrane potential and hence an increase of the electrical driving force for further calcium influx promoting sustained calcium entry in response to stimulation with chemotactic peptides. Required for maximal calcium influx and proliferation during the reactivation of naive T-cells. Plays a role in the late stages of EGF-induced macropinocytosis through activation by PI(3)P. This is Intermediate conductance calcium-activated potassium channel protein 4 from Homo sapiens (Human).